The chain runs to 655 residues: p-hydroxybenzoic acid efflux pump subunit AaeB (655 aa).

11 consecutive transmembrane segments (helical) span residues 13 to 33 (FAVK…HFQL), 38 to 58 (WAVL…GGEP), 69 to 89 (LRII…IAMI), 93 to 113 (LLMI…SSLV), 121 to 141 (WGLA…EPLL), 152 to 172 (EIVI…PRSI), 370 to 390 (LFWL…IAVV), 407 to 427 (FIYG…VIIP), 431 to 451 (QSML…GIEV), 459 to 479 (MGAL…TFHF), and 482 to 502 (FLDS…VILL).

Belongs to the aromatic acid exporter ArAE (TC 2.A.85) family.

The protein localises to the cell inner membrane. Functionally, forms an efflux pump with AaeA. Could function as a metabolic relief valve, allowing to eliminate certain compounds when they accumulate to high levels in the cell. In Shigella sonnei (strain Ss046), this protein is p-hydroxybenzoic acid efflux pump subunit AaeB.